The sequence spans 316 residues: Pantothenate kinase (316 aa).

ATP is bound at residue 99 to 106; sequence GSVAVGKS.

The protein belongs to the prokaryotic pantothenate kinase family.

It localises to the cytoplasm. The catalysed reaction is (R)-pantothenate + ATP = (R)-4'-phosphopantothenate + ADP + H(+). It participates in cofactor biosynthesis; coenzyme A biosynthesis; CoA from (R)-pantothenate: step 1/5. The sequence is that of Pantothenate kinase (coaA) from Pasteurella multocida (strain Pm70).